Here is a 78-residue protein sequence, read N- to C-terminus: cAMP-dependent protein kinase inhibitor beta (78 aa).

Residues 1 to 10 show a composition bias toward basic and acidic residues; that stretch reads MRTDSSKMTD. Positions 1 to 78 are disordered; that stretch reads MRTDSSKMTD…QLEKPQNEEK (78 aa). The segment covering 33 to 42 has biased composition (polar residues); sequence IQSSAATDGT. A compositionally biased stretch (basic and acidic residues) spans 53–78; sequence SVKEDAKEKDEKTTQDQLEKPQNEEK.

The protein belongs to the PKI family.

In terms of biological role, extremely potent competitive inhibitor of cAMP-dependent protein kinase activity, this protein interacts with the catalytic subunit of the enzyme after the cAMP-induced dissociation of its regulatory chains. This is cAMP-dependent protein kinase inhibitor beta (PKIB) from Homo sapiens (Human).